The sequence spans 697 residues: Phenoloxidase 1 (697 aa).

Positions 1–101 (MSDMSGDVVE…PKHQEMATEV (101 aa)) are cleaved as a propeptide — removed by PPAE1. The Cu cation site is built by histidine 217, histidine 221, and histidine 247. Residues asparagine 260 and asparagine 313 are each glycosylated (N-linked (GlcNAc...) asparagine). Catalysis depends on glutamate 355, which acts as the Proton acceptor. The Cu cation site is built by histidine 370, histidine 374, and histidine 410. N-linked (GlcNAc...) asparagine glycosylation is found at asparagine 498 and asparagine 552. 2 disulfide bridges follow: cysteine 587-cysteine 631 and cysteine 589-cysteine 638.

The protein belongs to the tyrosinase family. Heterodimer. The cofactor is Cu(2+). Post-translationally, activated by the cleavage of the N-terminal propeptide by PPAE1. In terms of tissue distribution, expressed in hemocytes.

It is found in the secreted. It carries out the reaction L-tyrosine + O2 = L-dopaquinone + H2O. The catalysed reaction is 2 L-dopa + O2 = 2 L-dopaquinone + 2 H2O. With respect to regulation, activated by a cationic detergent cetyl pyridinium chloride (CPC). Inhibited by phenyl thio-urea (PTU). Functionally, this is a copper-containing oxidase that functions in the formation of pigments such as melanins and other polyphenolic compounds. Catalyzes the rate-limiting conversions of tyrosine to DOPA, DOPA to DOPA-quinone and possibly 5,6 dihydroxyindole to indole-5'6 quinone. Catalyzes the oxidation of 4-methylcatechol. Binds to the surface of hemocytes and is involved in hemocyte melanization. In Spodoptera litura (Asian cotton leafworm), this protein is Phenoloxidase 1.